The chain runs to 126 residues: Histone H2B type 1-N (126 aa).

The segment covering 1–12 (MPEPSKSAPAPK) has biased composition (low complexity). The disordered stretch occupies residues 1–36 (MPEPSKSAPAPKKGSKKAVTKAQKKDGKKRKRSRKE). Residue proline 2 is modified to N-acetylproline. Position 3 is an ADP-ribosyl glutamic acid (glutamate 3). Lysine 6 carries the post-translational modification N6-(2-hydroxyisobutyryl)lysine; alternate. Lysine 6 is modified (N6-(beta-hydroxybutyryl)lysine; alternate). The residue at position 6 (lysine 6) is an N6-acetyllysine; alternate. At lysine 6 the chain carries N6-butyryllysine; alternate. Lysine 6 carries the post-translational modification N6-crotonyllysine; alternate. Position 6 is an N6-lactoyllysine; alternate (lysine 6). A Glycyl lysine isopeptide (Lys-Gly) (interchain with G-Cter in SUMO2); alternate cross-link involves residue lysine 6. Position 7 is an ADP-ribosylserine (serine 7). Lysine 12 carries the N6-(beta-hydroxybutyryl)lysine; alternate modification. Lysine 12 and lysine 13 each carry N6-acetyllysine; alternate. Residues lysine 12 and lysine 13 each carry the N6-crotonyllysine; alternate modification. Lysine 12 carries the post-translational modification N6-lactoyllysine; alternate. Lysine 13 is subject to N6-(2-hydroxyisobutyryl)lysine; alternate. Serine 15 carries the post-translational modification Phosphoserine; by STK4/MST1. Lysine 16, lysine 17, lysine 21, and lysine 24 each carry N6-acetyllysine; alternate. N6-crotonyllysine; alternate is present on residues lysine 16, lysine 17, lysine 21, and lysine 24. N6-lactoyllysine; alternate occurs at positions 16, 17, 21, and 24. N6-(beta-hydroxybutyryl)lysine; alternate occurs at positions 17 and 21. The residue at position 17 (lysine 17) is an N6-glutaryllysine; alternate. N6-(2-hydroxyisobutyryl)lysine; alternate is present on residues lysine 21 and lysine 24. Lysine 21 carries the post-translational modification N6-butyryllysine; alternate. A Glycyl lysine isopeptide (Lys-Gly) (interchain with G-Cter in SUMO2); alternate cross-link involves residue lysine 21. At lysine 25 the chain carries N6-(2-hydroxyisobutyryl)lysine. Lysine 35 is subject to N6-(2-hydroxyisobutyryl)lysine; alternate. The residue at position 35 (lysine 35) is an N6-(beta-hydroxybutyryl)lysine; alternate. The residue at position 35 (lysine 35) is an N6-crotonyllysine; alternate. At lysine 35 the chain carries N6-glutaryllysine; alternate. At lysine 35 the chain carries N6-succinyllysine; alternate. A Glycyl lysine isopeptide (Lys-Gly) (interchain with G-Cter in ubiquitin); alternate cross-link involves residue lysine 35. Glutamate 36 carries the polyADP-ribosyl glutamic acid modification. A Phosphoserine; by AMPK modification is found at serine 37. Lysine 44, lysine 47, and lysine 58 each carry N6-(2-hydroxyisobutyryl)lysine; alternate. Residue lysine 44 is modified to N6-lactoyllysine; alternate. N6-glutaryllysine; alternate is present on residues lysine 44 and lysine 47. Lysine 47 carries the post-translational modification N6-methyllysine; alternate. Lysine 58 is subject to N6,N6-dimethyllysine; alternate. A Dimethylated arginine modification is found at arginine 80. Position 86 is an N6-(2-hydroxyisobutyryl)lysine; alternate (lysine 86). Residue lysine 86 is modified to N6-(beta-hydroxybutyryl)lysine; alternate. Lysine 86 is modified (N6-acetyllysine; alternate). N6-lactoyllysine; alternate is present on lysine 86. Lysine 86 carries the post-translational modification N6,N6,N6-trimethyllysine; alternate. An omega-N-methylarginine mark is found at arginine 87 and arginine 93. Residue lysine 109 is modified to N6-(2-hydroxyisobutyryl)lysine; alternate. At lysine 109 the chain carries N6-lactoyllysine; alternate. Position 109 is an N6-glutaryllysine; alternate (lysine 109). Lysine 109 carries the N6-methyllysine; alternate modification. O-linked (GlcNAc) serine glycosylation occurs at serine 113. Threonine 116 carries the post-translational modification Phosphothreonine. Residues lysine 117 and lysine 121 each carry the N6-(2-hydroxyisobutyryl)lysine; alternate modification. N6-(beta-hydroxybutyryl)lysine; alternate occurs at positions 117 and 121. N6-lactoyllysine; alternate occurs at positions 117 and 121. Residues lysine 117 and lysine 121 each carry the N6-glutaryllysine; alternate modification. N6-succinyllysine; alternate occurs at positions 117 and 121. Lysine 117 bears the N6-malonyllysine; alternate mark. Lysine 117 bears the N6-methylated lysine; alternate mark. A Glycyl lysine isopeptide (Lys-Gly) (interchain with G-Cter in ubiquitin); alternate cross-link involves residue lysine 121.

The protein belongs to the histone H2B family. In terms of assembly, the nucleosome is a histone octamer containing two molecules each of H2A, H2B, H3 and H4 assembled in one H3-H4 heterotetramer and two H2A-H2B heterodimers. The octamer wraps approximately 147 bp of DNA. Post-translationally, monoubiquitination at Lys-35 (H2BK34Ub) by the MSL1/MSL2 dimer is required for histone H3 'Lys-4' (H3K4me) and 'Lys-79' (H3K79me) methylation and transcription activation at specific gene loci, such as HOXA9 and MEIS1 loci. Similarly, monoubiquitination at Lys-121 (H2BK120Ub) by the RNF20/40 complex gives a specific tag for epigenetic transcriptional activation and is also prerequisite for histone H3 'Lys-4' and 'Lys-79' methylation. It also functions cooperatively with the FACT dimer to stimulate elongation by RNA polymerase II. H2BK120Ub also acts as a regulator of mRNA splicing: deubiquitination by USP49 is required for efficient cotranscriptional splicing of a large set of exons. Phosphorylation at Ser-37 (H2BS36ph) by AMPK in response to stress promotes transcription. Phosphorylated on Ser-15 (H2BS14ph) by STK4/MST1 during apoptosis; which facilitates apoptotic chromatin condensation. Also phosphorylated on Ser-15 in response to DNA double strand breaks (DSBs), and in correlation with somatic hypermutation and immunoglobulin class-switch recombination. In terms of processing, glcNAcylation at Ser-113 promotes monoubiquitination of Lys-121. It fluctuates in response to extracellular glucose, and associates with transcribed genes. Post-translationally, ADP-ribosylated by PARP1 or PARP2 on Ser-7 (H2BS6ADPr) in response to DNA damage. H2BS6ADPr promotes recruitment of CHD1L. Mono-ADP-ribosylated on Glu-3 (H2BE2ADPr) by PARP3 in response to single-strand breaks. Poly ADP-ribosylation on Glu-36 (H2BE35ADPr) by PARP1 regulates adipogenesis: it inhibits phosphorylation at Ser-37 (H2BS36ph), thereby blocking expression of pro-adipogenetic genes. Crotonylation (Kcr) is specifically present in male germ cells and marks testis-specific genes in post-meiotic cells, including X-linked genes that escape sex chromosome inactivation in haploid cells. Crotonylation marks active promoters and enhancers and confers resistance to transcriptional repressors. It is also associated with post-meiotically activated genes on autosomes. In terms of processing, lactylated in macrophages by EP300/P300 by using lactoyl-CoA directly derived from endogenous or exogenous lactate, leading to stimulates gene transcription.

Its subcellular location is the nucleus. It is found in the chromosome. Core component of nucleosome. Nucleosomes wrap and compact DNA into chromatin, limiting DNA accessibility to the cellular machineries which require DNA as a template. Histones thereby play a central role in transcription regulation, DNA repair, DNA replication and chromosomal stability. DNA accessibility is regulated via a complex set of post-translational modifications of histones, also called histone code, and nucleosome remodeling. This Homo sapiens (Human) protein is Histone H2B type 1-N.